Here is a 464-residue protein sequence, read N- to C-terminus: Galactose-proton symporter (464 aa).

The Cytoplasmic portion of the chain corresponds to 1–15 (MPDAKKQGRSNKAMT). A helical transmembrane segment spans residues 16–36 (FFVCFLAALAGLLFGLDIGVI). Over 37-56 (AGALPFIADEFQITSHTQEW) the chain is Periplasmic. The chain crosses the membrane as a helical span at residues 57–77 (VVSSMMFGAAVGAVGSGWLSF). Topologically, residues 78–84 (KLGRKKS) are cytoplasmic. A helical transmembrane segment spans residues 85–105 (LMIGAILFVAGSLFSAAAPNV). Residues 106 to 112 (EVLILSR) are Periplasmic-facing. A helical transmembrane segment spans residues 113 to 133 (VLLGLAVGVASYTAPLYLSEI). Over 134–139 (APEKIR) the chain is Cytoplasmic. Residues 140–160 (GSMISMYQLMITIGILGAYLS) form a helical membrane-spanning segment. The Periplasmic portion of the chain corresponds to 161-171 (DTAFSYTGAWR). The helical transmembrane segment at 172 to 192 (WMLGVIIIPAILLLIGVFFLP) threads the bilayer. The Cytoplasmic portion of the chain corresponds to 193–250 (DSPRWFAAKRRFVDAERVLLRLRDTSAEAKRELDEIRESLQVKQSGWALFKENSNFRR). A helical membrane pass occupies residues 251-271 (AVFLGVLLQVMQQFTGMNVIM). The Periplasmic segment spans residues 272 to 290 (YYAPKIFELAGYTNTTEQM). A helical membrane pass occupies residues 291–311 (WGTVIVGLTNVLATFIAIGLV). Topologically, residues 312 to 321 (DRWGRKPTLT) are cytoplasmic. Residues 322–342 (LGFLVMAAGMGVLGTMMHIGI) traverse the membrane as a helical segment. The Periplasmic portion of the chain corresponds to 343-351 (HSPSAQYFA). The chain crosses the membrane as a helical span at residues 352 to 372 (IAMLLMFIVGFAMSAGPLIWV). At 373–394 (LCSEIQPLKGRDFGITCSTATN) the chain is on the cytoplasmic side. The helical transmembrane segment at 395-415 (WIANMIVGATFLTMLNTLGNA) threads the bilayer. Asparagine 416 is a topological domain (periplasmic). A helical membrane pass occupies residues 417-437 (TFWVYAALNVLFILLTLWLVP). At 438–464 (ETKHVSLEHIERNLMKGRKLREIGAHD) the chain is on the cytoplasmic side.

Belongs to the major facilitator superfamily. Sugar transporter (TC 2.A.1.1) family.

The protein localises to the cell inner membrane. In terms of biological role, uptake of galactose across the boundary membrane with the concomitant transport of protons into the cell (symport system). In Escherichia coli O6:H1 (strain CFT073 / ATCC 700928 / UPEC), this protein is Galactose-proton symporter (galP).